The primary structure comprises 342 residues: Farnesyl pyrophosphate synthase (342 aa).

Residues Lys47, Arg50, and Gln86 each contribute to the isopentenyl diphosphate site. The Mg(2+) site is built by Asp93 and Asp97. Arg102 serves as a coordination point for dimethylallyl diphosphate. Arg103 contributes to the isopentenyl diphosphate binding site. Dimethylallyl diphosphate is bound by residues Lys190, Thr191, Gln229, Lys246, and Lys255.

Belongs to the FPP/GGPP synthase family. In terms of assembly, homodimer. It depends on Mg(2+) as a cofactor. Mostly expressed in roots and seeds, and to a lower extent, in leaves and stems.

It is found in the cytoplasm. The catalysed reaction is isopentenyl diphosphate + dimethylallyl diphosphate = (2E)-geranyl diphosphate + diphosphate. It catalyses the reaction isopentenyl diphosphate + (2E)-geranyl diphosphate = (2E,6E)-farnesyl diphosphate + diphosphate. It participates in isoprenoid biosynthesis; farnesyl diphosphate biosynthesis; farnesyl diphosphate from geranyl diphosphate and isopentenyl diphosphate: step 1/1. Its pathway is isoprenoid biosynthesis; geranyl diphosphate biosynthesis; geranyl diphosphate from dimethylallyl diphosphate and isopentenyl diphosphate: step 1/1. With respect to regulation, stimulated by methyl jasmonate (MeJA). Its function is as follows. Catalyzes the sequential condensation of isopentenyl pyrophosphate with the allylic pyrophosphates, dimethylallyl pyrophosphate, and then with the resultant geranylpyrophosphate to the ultimate product farnesyl pyrophosphate. Component of the triterpene saponins (e.g. ginsenosides or panaxosides) and phytosterols biosynthetic pathways. Promotes the accumulation of ginsenosides. This is Farnesyl pyrophosphate synthase from Panax ginseng (Korean ginseng).